The sequence spans 60 residues: Large ribosomal subunit protein bL32 (60 aa).

The disordered stretch occupies residues 1–60 (MAVQQNKKSPSKRGMHRSHNALTVPGIAVESTTGETHLRHHISPTGFYRGRKVLKTKSEA). Basic residues-rich tracts occupy residues 9–19 (SPSKRGMHRSH) and 49–60 (RGRKVLKTKSEA).

The protein belongs to the bacterial ribosomal protein bL32 family.

This is Large ribosomal subunit protein bL32 from Polaromonas sp. (strain JS666 / ATCC BAA-500).